A 225-amino-acid polypeptide reads, in one-letter code: Uridylate kinase (225 aa).

9 to 10 (GS) is an ATP binding site. Gly-44 contributes to the UMP binding site. ATP contacts are provided by Gly-45 and Arg-49. UMP is bound by residues Asp-66 and 114-120 (THPGHTT). Thr-140, Asn-141, Tyr-146, and Asp-149 together coordinate ATP.

Belongs to the UMP kinase family. As to quaternary structure, homohexamer.

The protein localises to the cytoplasm. The catalysed reaction is UMP + ATP = UDP + ADP. Its pathway is pyrimidine metabolism; CTP biosynthesis via de novo pathway; UDP from UMP (UMPK route): step 1/1. Inhibited by UTP. Its function is as follows. Catalyzes the reversible phosphorylation of UMP to UDP. This Pyrococcus abyssi (strain GE5 / Orsay) protein is Uridylate kinase.